The following is a 363-amino-acid chain: TLTAAITMALSTISGKQGKKYDDIDSAPEEKARGITINTAHVEYETETRHYAHVDCPGHADYVKNMITGAAQMDGAILVVSGADGPMPQTKEHLLLAKQVGVPSIVVFLNKEDQVDDEELLELVELEVREMLDNYDFPGDDTPIITGSALLALQALTDTTDAIGRGSNPWVDKILTLMDNVDEYIPTPERETEKPFLMAVEDVFSITGRGTVATGRVERGGIKIGDTVEIVGLKETRSTTVTGLKMFQKMLQESIAGDNVGMLLRGIQKTDIQRGMVIAQPGSITPHVSFEAQVYVLTKEEGGRHTPFLSGYRPQFYVRTTDVTGKVESLKSDEDKSEMKMVVPGDRVTMSVELVQPIAIEKG.

The 189-residue stretch at 1-189 (TLTAAITMAL…NVDEYIPTPE (189 aa)) folds into the tr-type G domain. Residues 55–59 (DCPGH) and 110–113 (NKED) contribute to the GTP site.

This sequence belongs to the TRAFAC class translation factor GTPase superfamily. Classic translation factor GTPase family. EF-Tu/EF-1A subfamily.

It localises to the plastid. The protein resides in the chloroplast. The enzyme catalyses GTP + H2O = GDP + phosphate + H(+). Its function is as follows. GTP hydrolase that promotes the GTP-dependent binding of aminoacyl-tRNA to the A-site of ribosomes during protein biosynthesis. This is Elongation factor Tu, chloroplastic (tufA) from Gymnochlora stellata.